The sequence spans 259 residues: 5'-nucleotidase SurE (259 aa).

The a divalent metal cation site is built by Asp8, Asp9, Ser40, and Asn92.

It belongs to the SurE nucleotidase family. A divalent metal cation serves as cofactor.

The protein localises to the cytoplasm. The catalysed reaction is a ribonucleoside 5'-phosphate + H2O = a ribonucleoside + phosphate. In terms of biological role, nucleotidase that shows phosphatase activity on nucleoside 5'-monophosphates. The polypeptide is 5'-nucleotidase SurE (Stenotrophomonas maltophilia (strain K279a)).